The chain runs to 111 residues: Nucleoid-associated protein CT0805 (111 aa).

This sequence belongs to the YbaB/EbfC family. In terms of assembly, homodimer.

It localises to the cytoplasm. The protein resides in the nucleoid. In terms of biological role, binds to DNA and alters its conformation. May be involved in regulation of gene expression, nucleoid organization and DNA protection. This Chlorobaculum tepidum (strain ATCC 49652 / DSM 12025 / NBRC 103806 / TLS) (Chlorobium tepidum) protein is Nucleoid-associated protein CT0805.